The primary structure comprises 128 residues: Fluoride-specific ion channel FluC (128 aa).

4 helical membrane-spanning segments follow: residues 5–25 (IVAI…LGLA), 35–55 (LGTL…AVVF), 67–87 (LFVI…SVEV), and 96–116 (FGWA…LTAL). The Na(+) site is built by G75 and T78.

Belongs to the fluoride channel Fluc/FEX (TC 1.A.43) family.

It is found in the cell inner membrane. The enzyme catalyses fluoride(in) = fluoride(out). With respect to regulation, na(+) is not transported, but it plays an essential structural role and its presence is essential for fluoride channel function. In terms of biological role, fluoride-specific ion channel. Important for reducing fluoride concentration in the cell, thus reducing its toxicity. This Burkholderia vietnamiensis (strain G4 / LMG 22486) (Burkholderia cepacia (strain R1808)) protein is Fluoride-specific ion channel FluC.